A 341-amino-acid polypeptide reads, in one-letter code: KH domain-containing RNA-binding protein QKI (341 aa).

Residues 11-82 form a qua1 domain; involved in homodimerization region; sequence PNPTPDYLMQ…PDAVGPIVQL (72 aa). In terms of domain architecture, KH spans 87-153; it reads YVPVKEYPDF…WEHLNEDLHV (67 aa). Residues 182-213 form a qua2 domain; involved in RNA binding region; it reads AAEGEDSLKKMQLMELAILNGTYRDANIKSPA. Residue Ser188 is modified to Phosphoserine. Arg227 is subject to Omega-N-methylarginine. Position 242 is an asymmetric dimethylarginine; by CARM1; alternate (Arg242). At Arg242 the chain carries Omega-N-methylarginine; alternate. Position 256 is an omega-N-methylarginine (Arg256). Positions 276 to 279 match the SH3-binding motif; sequence PPGP. The short motif at 324 to 330 is the Nuclear localization signal element; the sequence is RVHPYQR.

Belongs to the quaking family. Homodimer; does not require RNA to homodimerize. Able to heterodimerize with BICC1. In terms of processing, methylated by PRMT1. Post-translationally, tyrosine phosphorylated at its C-terminus, probably by FYN. Phosphorylation leads to decreased mRNA-binding affinity, affecting transport and/or stabilization of MBP mRNA. Ubiquitinated by RNF6 in macrophages, leading to its degradation. Present in myelinating oligodendrocytes (at protein level).

The protein resides in the nucleus. It is found in the cytoplasm. RNA reader protein, which recognizes and binds specific RNAs, thereby regulating RNA metabolic processes, such as pre-mRNA splicing, circular RNA (circRNA) formation, mRNA export, mRNA stability and/or translation. Involved in various cellular processes, such as mRNA storage into stress granules, apoptosis, lipid deposition, interferon response, glial cell fate and development. Binds to the 5'-NACUAAY-N(1,20)-UAAY-3' RNA core sequence. Acts as a mRNA modification reader that specifically recognizes and binds mRNA transcripts modified by internal N(7)-methylguanine (m7G). Promotes the formation of circular RNAs (circRNAs) during the epithelial to mesenchymal transition and in cardiomyocytes: acts by binding to sites flanking circRNA-forming exons. CircRNAs are produced by back-splicing circularization of pre-mRNAs. Plays a central role in myelinization via 3 distinct mechanisms. First, acts by protecting and promoting stability of target mRNAs such as MBP, SIRT2 and CDKN1B, which promotes oligodendrocyte differentiation. Second, participates in mRNA transport by regulating the nuclear export of MBP mRNA. Finally, indirectly regulates mRNA splicing of MAG pre-mRNA during oligodendrocyte differentiation by acting as a negative regulator of MAG exon 12 alternative splicing: acts by binding to HNRNPA1 mRNA splicing factor, preventing its translation. Involved in microglia differentiation and remyelination by regulating microexon alternative splicing of the Rho GTPase pathway. Involved in macrophage differentiation: promotes monocyte differentiation by regulating pre-mRNA splicing in naive peripheral blood monocytes. Acts as an important regulator of muscle development: required for the contractile function of cardiomyocytes by regulating alternative splicing of cardiomyocyte transcripts. Acts as a negative regulator of thermogenesis by decreasing stability, nuclear export and translation of mRNAs encoding PPARGC1A and UCP1. Also required for visceral endoderm function and blood vessel development. May also play a role in smooth muscle development. In addition to its RNA-binding activity, also acts as a nuclear transcription coactivator for SREBF2/SREBP2. In Rattus norvegicus (Rat), this protein is KH domain-containing RNA-binding protein QKI.